The chain runs to 259 residues: Ubiquitin-conjugating enzyme E2 J2 (259 aa).

At 1 to 226 (MSSTSSKRAP…AGLQQANRHH (226 aa)) the chain is on the cytoplasmic side. The region spanning 12 to 162 (TATQRLKQDY…DKVFCELFPE (151 aa)) is the UBC core domain. Residue Cys94 is the Glycyl thioester intermediate of the active site. A helical; Anchor for type IV membrane protein membrane pass occupies residues 227 to 247 (GLLGGALANLFVIVGFAAFAY). Residues 248 to 259 (TVKYVLRSIAQE) lie on the Lumenal side of the membrane.

It belongs to the ubiquitin-conjugating enzyme family. In terms of processing, auto-ubiquitinated.

The protein resides in the endoplasmic reticulum membrane. The enzyme catalyses S-ubiquitinyl-[E1 ubiquitin-activating enzyme]-L-cysteine + [E2 ubiquitin-conjugating enzyme]-L-cysteine = [E1 ubiquitin-activating enzyme]-L-cysteine + S-ubiquitinyl-[E2 ubiquitin-conjugating enzyme]-L-cysteine.. It participates in protein modification; protein ubiquitination. Functionally, catalyzes the covalent attachment of ubiquitin to other proteins. Seems to function in the selective degradation of misfolded membrane proteins from the endoplasmic reticulum (ERAD). In cooperation with the GATOR2 complex, catalyzes 'Lys-6'-linked ubiquitination of NPRL2. This Homo sapiens (Human) protein is Ubiquitin-conjugating enzyme E2 J2 (UBE2J2).